Consider the following 483-residue polypeptide: Succinate semialdehyde dehydrogenase (483 aa).

Residues 156-157 (WN), 180-183 (KPAP), and 233-234 (GS) contribute to the NAD(+) site. Catalysis depends on E255, which acts as the Proton acceptor. Position 256 (L256) interacts with NAD(+). Catalysis depends on C289, which acts as the Nucleophile. E386 provides a ligand contact to NAD(+).

It belongs to the aldehyde dehydrogenase family. In terms of assembly, homotetramer.

It carries out the reaction succinate semialdehyde + NAD(+) + H2O = succinate + NADH + 2 H(+). In terms of biological role, involved in the degradation of the pyridine ring of trigonelline (TG; N-methylnicotinate) into succinate and methylamine as carbon and nitrogen sources, respectively. Catalyzes the NAD(+)-dependent oxidation of succinate semialdehyde to succinate. The chain is Succinate semialdehyde dehydrogenase from Acinetobacter baylyi (strain ATCC 33305 / BD413 / ADP1).